Reading from the N-terminus, the 418-residue chain is Thyroxine-binding globulin (418 aa).

A signal peptide spans 1 to 20 (MSMFFYLFLLVLGLQATIHC). N-linked (GlcNAc...) asparagine glycans are attached at residues Asn-24, Asn-39, Asn-102, Asn-168, Asn-227, and Asn-256. The thyroxine site is built by Asn-296 and Lys-401.

Belongs to the serpin family. Expressed by the liver and secreted in plasma.

It localises to the secreted. Functionally, major thyroid hormone transport protein in serum. This chain is Thyroxine-binding globulin (Serpina7), found in Rattus norvegicus (Rat).